The sequence spans 1031 residues: uncharacterized protein (1031 aa).

An SWIM-type zinc finger spans residues Phe50–Asn85. The region spanning Arg590–Asn751 is the Helicase ATP-binding domain. Position 603–610 (Asp603–Thr610) interacts with ATP. The DEAQ box motif lies at Asp702 to Gln705. The 155-residue stretch at Ala868–Ser1022 folds into the Helicase C-terminal domain.

This sequence belongs to the SNF2/RAD54 helicase family.

This is an uncharacterized protein from Mycoplasma genitalium (strain ATCC 33530 / DSM 19775 / NCTC 10195 / G37) (Mycoplasmoides genitalium).